Consider the following 264-residue polypeptide: Segregation and condensation protein A (264 aa).

It belongs to the ScpA family. Component of a cohesin-like complex composed of ScpA, ScpB and the Smc homodimer, in which ScpA and ScpB bind to the head domain of Smc. The presence of the three proteins is required for the association of the complex with DNA.

It localises to the cytoplasm. Its function is as follows. Participates in chromosomal partition during cell division. May act via the formation of a condensin-like complex containing Smc and ScpB that pull DNA away from mid-cell into both cell halves. In Enterococcus faecalis (strain ATCC 700802 / V583), this protein is Segregation and condensation protein A.